The sequence spans 351 residues: Muscleblind-like protein 2a (351 aa).

4 C3H1-type zinc fingers span residues 13–41 (WLTL…HPPK), 47–73 (NGRV…HPPA), 177–205 (TDKL…HPSD), and 213–239 (DNTV…HPPA).

Belongs to the muscleblind family. Expressed in fast and slow myotomal muscle, heart, liver, skin, brain and testis.

It localises to the nucleus. The protein localises to the cytoplasm. In terms of biological role, involved in pre-mRNA alternative splicing regulation. RNA-binding protein that binds to 5'ACACCC-3' core sequence. The sequence is that of Muscleblind-like protein 2a (mbnl2a) from Takifugu rubripes (Japanese pufferfish).